Consider the following 277-residue polypeptide: MQGEASRLADRESRDSFAAKLRESGNDAWEIGNELFTITYVFDHNPRIPRALTDPGRPTEDKVALLNNLLGKQALPLTMEILTDLVGRSWSRAGDIDNAIEDFAVDAMMYQADDEKKTLKVSVQLAQLQSALLNLPVVRSDLSDSQGPLNVRYELLHALIDGADFDRITVRLAEHCTRNPRNRRYLESVQWLINKFSRHMGESMVTVTTATPLSDEQSDKLARIYTKKTGRPVHIHSVVDPTVMGGMRIQVGDEVTDNTVVAQLENLKRKVKAGVSE.

Belongs to the ATPase delta chain family. In terms of assembly, F-type ATPases have 2 components, F(1) - the catalytic core - and F(0) - the membrane proton channel. F(1) has five subunits: alpha(3), beta(3), gamma(1), delta(1), epsilon(1). F(0) has three main subunits: a(1), b(2) and c(10-14). The alpha and beta chains form an alternating ring which encloses part of the gamma chain. F(1) is attached to F(0) by a central stalk formed by the gamma and epsilon chains, while a peripheral stalk is formed by the delta and b chains.

Its subcellular location is the cell membrane. F(1)F(0) ATP synthase produces ATP from ADP in the presence of a proton or sodium gradient. F-type ATPases consist of two structural domains, F(1) containing the extramembraneous catalytic core and F(0) containing the membrane proton channel, linked together by a central stalk and a peripheral stalk. During catalysis, ATP synthesis in the catalytic domain of F(1) is coupled via a rotary mechanism of the central stalk subunits to proton translocation. Functionally, this protein is part of the stalk that links CF(0) to CF(1). It either transmits conformational changes from CF(0) to CF(1) or is implicated in proton conduction. This is ATP synthase subunit delta from Bifidobacterium animalis subsp. lactis (strain AD011).